Consider the following 494-residue polypeptide: 4-trimethylaminobutyraldehyde dehydrogenase (494 aa).

Position 2 is an N-acetylserine; in 4-trimethylaminobutyraldehyde dehydrogenase, N-terminally processed (Ser-2). N6-acetyllysine; alternate is present on Lys-30. Position 30 is an N6-succinyllysine; alternate (Lys-30). The residue at position 59 (Lys-59) is an N6-succinyllysine. NAD(+) contacts are provided by residues Lys-180 and 232-236; that span reads GSVPT. Glu-254 (proton acceptor) is an active-site residue. The active-site Nucleophile is Cys-288. The residue at position 298 (Lys-298) is an N6-acetyllysine. An N6-acetyllysine; alternate modification is found at Lys-303. The residue at position 303 (Lys-303) is an N6-succinyllysine; alternate. The residue at position 344 (Lys-344) is an N6-acetyllysine. Glu-391 lines the NAD(+) pocket.

The protein belongs to the aldehyde dehydrogenase family. Homotetramer. As to expression, detected in brain (at protein level). High expression in adult liver, skeletal muscle, and kidney. Low levels in heart, pancreas, lung and brain. Expressed in all regions of the brain. Expression levels are variable in the different brain areas, with the highest levels in the spinal cord and the lowest in the occipital pole.

The protein localises to the cytoplasm. It is found in the cytosol. The enzyme catalyses 4-(trimethylamino)butanal + NAD(+) + H2O = 4-(trimethylamino)butanoate + NADH + 2 H(+). It catalyses the reaction an aldehyde + NAD(+) + H2O = a carboxylate + NADH + 2 H(+). It carries out the reaction 4-aminobutanal + NAD(+) + H2O = 4-aminobutanoate + NADH + 2 H(+). The catalysed reaction is formaldehyde + NAD(+) + H2O = formate + NADH + 2 H(+). The enzyme catalyses acetaldehyde + NAD(+) + H2O = acetate + NADH + 2 H(+). It catalyses the reaction imidazole-4-acetaldehyde + NAD(+) + H2O = imidazole-4-acetate + NADH + 2 H(+). It carries out the reaction acrolein + NAD(+) + H2O = acrylate + NADH + 2 H(+). The catalysed reaction is (5-hydroxyindol-3-yl)acetaldehyde + NAD(+) + H2O = (5-hydroxyindol-3-yl)acetate + NADH + 2 H(+). The enzyme catalyses 3,4-dihydroxyphenylacetaldehyde + NAD(+) + H2O = 3,4-dihydroxyphenylacetate + NADH + 2 H(+). It catalyses the reaction spermine monoaldehyde + NAD(+) + H2O = N-(2-carboxyethyl)spermidine + NADH + 2 H(+). It carries out the reaction propanal + NAD(+) + H2O = propanoate + NADH + 2 H(+). The catalysed reaction is butanal + NAD(+) + H2O = butanoate + NADH + 2 H(+). The enzyme catalyses pentanal + NAD(+) + H2O = pentanoate + NADH + 2 H(+). It catalyses the reaction hexanal + NAD(+) + H2O = hexanoate + NADH + 2 H(+). It functions in the pathway amine and polyamine biosynthesis; carnitine biosynthesis. Its function is as follows. Converts gamma-trimethylaminobutyraldehyde into gamma-butyrobetaine with high efficiency (in vitro). Can catalyze the irreversible oxidation of a broad range of aldehydes to the corresponding acids in an NAD-dependent reaction, but with low efficiency. Catalyzes the oxidation of aldehydes arising from biogenic amines and polyamines. In Homo sapiens (Human), this protein is 4-trimethylaminobutyraldehyde dehydrogenase (ALDH9A1).